We begin with the raw amino-acid sequence, 146 residues long: Probable trivalent organoarsenical cleaving enzyme (146 aa).

A VOC domain is found at 2 to 118; sequence KYVHVGVNVV…DGNEWEFFYT (117 aa). Fe(2+) is bound by residues histidine 5 and histidine 62. Positions 95 and 96 each coordinate roxarsone (III). A Fe(2+)-binding site is contributed by glutamate 114.

It to M.tuberculosis Rv2641. Fe(2+) is required as a cofactor.

The catalysed reaction is methylarsonous acid + AH2 + O2 = arsenite + methanol + A + H(+). It carries out the reaction roxarsone (III) + AH2 + O2 = 4-hydroxy-3-nitrocyclohexa-2,5-dien-1-one + arsenite + A + H(+). The enzyme catalyses nitarsone (III) + AH2 + O2 = 4-nitrocyclohexa-2,5-dien-1-one + arsenite + A + H(+). It catalyses the reaction 4-aminophenylarsonous acid + AH2 + O2 = 4-aminocyclohexa-2,5-dien-1-one + arsenite + A. In terms of biological role, nonheme iron-dependent dioxygenase that can break carbon-arsenic bonds, playing a role in the detoxification of environmental organoarsenical compounds. Catalyzes the oxygen-dependent demethylation of highly toxic methylarsonous acid (MAs(III)) to arsenite, which can then be exported out of the cell. Can also cleave the C-As bond in several trivalent aromatic arsenicals, including roxarsone (III), nitarsone (III) and (4-aminophenyl)arsonous acid. Organoarsenical degradation by this enzyme is proposed to have a significant impact on the arsenic biogeocycle that maintains a balance between organic and inorganic species. The sequence is that of Probable trivalent organoarsenical cleaving enzyme (yqcK) from Bacillus subtilis (strain 168).